Reading from the N-terminus, the 157-residue chain is Dihydrofolate reductase type 1 (157 aa).

A DHFR domain is found at 2 to 156 (KLSLMVAISK…INYSYQIWQK (155 aa)).

It belongs to the dihydrofolate reductase family. Homodimer.

The catalysed reaction is (6S)-5,6,7,8-tetrahydrofolate + NADP(+) = 7,8-dihydrofolate + NADPH + H(+). It participates in cofactor biosynthesis; tetrahydrofolate biosynthesis; 5,6,7,8-tetrahydrofolate from 7,8-dihydrofolate: step 1/1. Functionally, key enzyme in folate metabolism. Catalyzes an essential reaction for de novo glycine and purine synthesis, and for DNA precursor synthesis. In Escherichia coli, this protein is Dihydrofolate reductase type 1 (dhfrI).